The primary structure comprises 411 residues: MSKPLLDKTLFKKTLDVVGVRVEAKKIGRVVKKLHGHLLNLPRLRNVVPDPTNPDPYKNSSSKLILLNSKVKDMETLQPLNEDLVAFLKEESLAFVSHAIELDYSYFAVDQVLSELLPKGMDIPSSFETVGHIAHLNLRDNQLPFKNVIGQVILDKNAQIRTVVNKTDNIETKFRTFPMEVLAGDDDMEVEVHESKASFRFNYAEVYWNSRLQQEHLRIIRQIKPHDVVCDMMCGIGPFAVPVALNGSKVYANDLNPRSYHYLKENIALNKVEKLVTAYNLDGRDFLAKLLSEKKQFTQVLMNLPAIALEFLDAFPGQFDHWEGELPFVHCYCFSNADDVKQDVKQRAEKIMGGELDPERTSFHLVRDVAPKKVMVCISFQLPESIAFSSERQASKQDDPKRRKVAAENAA.

Residues histidine 216, aspartate 254–leucine 255, aspartate 282–glycine 283, and asparagine 303 each bind S-adenosyl-L-methionine. The tract at residues glutamate 391–alanine 411 is disordered.

It belongs to the class I-like SAM-binding methyltransferase superfamily. TRM5/TYW2 family. Monomer.

It localises to the mitochondrion matrix. The protein localises to the nucleus. The protein resides in the cytoplasm. It catalyses the reaction guanosine(37) in tRNA + S-adenosyl-L-methionine = N(1)-methylguanosine(37) in tRNA + S-adenosyl-L-homocysteine + H(+). In terms of biological role, specifically methylates the N1 position of guanosine-37 in various cytoplasmic and mitochondrial tRNAs. Methylation is not dependent on the nature of the nucleoside 5' of the target nucleoside. This is the first step in the biosynthesis of wybutosine (yW), a modified base adjacent to the anticodon of tRNAs and required for accurate decoding. The polypeptide is tRNA (guanine(37)-N(1))-methyltransferase (Phytophthora infestans (strain T30-4) (Potato late blight agent)).